The primary structure comprises 339 residues: Photosystem II assembly lipoprotein Ycf48 (339 aa).

The N-terminal stretch at 1–22 (MVIVKSWQKIFALLVVLLLCIG) is a signal peptide. The N-palmitoyl cysteine moiety is linked to residue Cys23. Residue Cys23 is the site of S-diacylglycerol cysteine attachment.

This sequence belongs to the Ycf48 family. Part of early PSII assembly complexes which includes D1 (psbA) and PsbI; not found in mature PSII. Binds to the lumenal side of PSII complexes. Interacts with YidC.

The protein localises to the cellular thylakoid membrane. Functionally, a factor required for optimal assembly of photosystem II (PSII), acting in the early stages of PSII assembly. Also plays a role in replacement of photodamaged D1 (psbA). Assists YidC in synthesis of chlorophyll-binding proteins. The polypeptide is Photosystem II assembly lipoprotein Ycf48 (Trichormus variabilis (strain ATCC 29413 / PCC 7937) (Anabaena variabilis)).